A 413-amino-acid chain; its full sequence is Ferredoxin--NADP reductase (413 aa).

M1 is subject to N-acetylmethionine. One can recognise a CpcD-like domain in the interval 18 to 76; sequence NRLFVYEVIGLSQSTMTDGLDYPIRRSGSTFITVPLKRMNQEMRRITRMGGKIVSIKPL. Positions 74 to 120 are disordered; it reads KPLEGDSPLPHTEGIAKPSQSEGSGSEAVANPAPESNKTMTTTPKEK. Polar residues predominate over residues 107 to 116; the sequence is PESNKTMTTT. Positions 133-256 constitute an FAD-binding FR-type domain; sequence KTPYIGKVLE…TGPVGKEMLL (124 aa). Residues 192 to 195, 213 to 215, Y219, 230 to 232, and T271 each bind FAD; these read RLYS, CVR, and VCS. NADP(+)-binding residues include S195 and R215. Residues T271, 303–304, 333–334, 343–347, 372–373, and E411 each bind NADP(+); these read IP, SR, RMYIQ, and GL.

The protein belongs to the ferredoxin--NADP reductase type 1 family. As to quaternary structure, purifies with both the classic phycobilisome (PBS) supercomplex (CpcG-PBS) and a photosystem I-associated PBS called CpcL-PBS; it accumulates to a higher level in CpcL-PBS. In both PBS it can be cross-linked to both phycocyanin subunits. Requires FAD as cofactor. Acetylated at the N-terminus; 6% of protein in CpcG-PBS and 12% of protein in CpcL-PBS is acetylated.

It localises to the cellular thylakoid membrane. The catalysed reaction is 2 reduced [2Fe-2S]-[ferredoxin] + NADP(+) + H(+) = 2 oxidized [2Fe-2S]-[ferredoxin] + NADPH. The protein is Ferredoxin--NADP reductase of Synechocystis sp. (strain ATCC 27184 / PCC 6803 / Kazusa).